A 398-amino-acid chain; its full sequence is S-adenosylmethionine synthase (398 aa).

Histidine 17 contributes to the ATP binding site. Aspartate 19 is a Mg(2+) binding site. Glutamate 45 contributes to the K(+) binding site. Residues glutamate 58 and glutamine 101 each coordinate L-methionine. The tract at residues 101–111 is flexible loop; that stretch reads QSPDIAQGVDT. Residues 176 to 178, 243 to 244, aspartate 252, 258 to 259, and lysine 279 contribute to the ATP site; these read DGK, RF, and RK. L-methionine is bound at residue aspartate 252. Lysine 283 is a binding site for L-methionine.

It belongs to the AdoMet synthase family. As to quaternary structure, homotetramer; dimer of dimers. It depends on Mg(2+) as a cofactor. The cofactor is K(+).

It is found in the cytoplasm. The catalysed reaction is L-methionine + ATP + H2O = S-adenosyl-L-methionine + phosphate + diphosphate. Its pathway is amino-acid biosynthesis; S-adenosyl-L-methionine biosynthesis; S-adenosyl-L-methionine from L-methionine: step 1/1. Its function is as follows. Catalyzes the formation of S-adenosylmethionine (AdoMet) from methionine and ATP. The overall synthetic reaction is composed of two sequential steps, AdoMet formation and the subsequent tripolyphosphate hydrolysis which occurs prior to release of AdoMet from the enzyme. This chain is S-adenosylmethionine synthase, found in Staphylococcus saprophyticus subsp. saprophyticus (strain ATCC 15305 / DSM 20229 / NCIMB 8711 / NCTC 7292 / S-41).